A 248-amino-acid chain; its full sequence is Putative glutamine amidotransferase-like protein C13C5.04 (248 aa).

One can recognise a Glutamine amidotransferase type-1 domain in the interval Pro-13–Phe-217.

This Schizosaccharomyces pombe (strain 972 / ATCC 24843) (Fission yeast) protein is Putative glutamine amidotransferase-like protein C13C5.04.